The following is an 81-amino-acid chain: Photosystem I iron-sulfur center (81 aa).

2 4Fe-4S ferredoxin-type domains span residues 2-31 (SHTV…MVPW) and 39-68 (IASA…VRVY). Cysteine 11, cysteine 14, cysteine 17, cysteine 21, cysteine 48, cysteine 51, cysteine 54, and cysteine 58 together coordinate [4Fe-4S] cluster.

The eukaryotic PSI reaction center is composed of at least 11 subunits. [4Fe-4S] cluster serves as cofactor.

The protein localises to the plastid. It localises to the chloroplast thylakoid membrane. It catalyses the reaction reduced [plastocyanin] + hnu + oxidized [2Fe-2S]-[ferredoxin] = oxidized [plastocyanin] + reduced [2Fe-2S]-[ferredoxin]. In terms of biological role, apoprotein for the two 4Fe-4S centers FA and FB of photosystem I (PSI); essential for photochemical activity. FB is the terminal electron acceptor of PSI, donating electrons to ferredoxin. The C-terminus interacts with PsaA/B/D and helps assemble the protein into the PSI complex. Required for binding of PsaD and PsaE to PSI. PSI is a plastocyanin/cytochrome c6-ferredoxin oxidoreductase, converting photonic excitation into a charge separation, which transfers an electron from the donor P700 chlorophyll pair to the spectroscopically characterized acceptors A0, A1, FX, FA and FB in turn. The protein is Photosystem I iron-sulfur center of Chlorella vulgaris (Green alga).